A 125-amino-acid polypeptide reads, in one-letter code: Large ribosomal subunit protein bL12 (125 aa).

It belongs to the bacterial ribosomal protein bL12 family. In terms of assembly, homodimer. Part of the ribosomal stalk of the 50S ribosomal subunit. Forms a multimeric L10(L12)X complex, where L10 forms an elongated spine to which 2 to 4 L12 dimers bind in a sequential fashion. Binds GTP-bound translation factors.

Its function is as follows. Forms part of the ribosomal stalk which helps the ribosome interact with GTP-bound translation factors. Is thus essential for accurate translation. The protein is Large ribosomal subunit protein bL12 of Erythrobacter litoralis (strain HTCC2594).